A 203-amino-acid chain; its full sequence is uncharacterized protein (203 aa).

Residues 1-31 form the signal peptide; sequence MKKTFVKKAMLTTAAMTSAALLTFGPDAASA.

This is an uncharacterized protein from Bacillus subtilis (strain 168).